The following is a 142-amino-acid chain: Hemoglobin subunit alpha (142 aa).

The Globin domain occupies 2 to 142 (VLSPADKTNV…VSTVLTSKYR (141 aa)). At Ser-4 the chain carries Phosphoserine. At Lys-8 the chain carries N6-succinyllysine. Phosphothreonine is present on Thr-9. Residue Lys-12 is modified to N6-succinyllysine. Lys-17 bears the N6-acetyllysine; alternate mark. Lys-17 bears the N6-succinyllysine; alternate mark. Tyr-25 carries the post-translational modification Phosphotyrosine. Ser-36 carries the post-translational modification Phosphoserine. Lys-41 is modified (N6-succinyllysine). At Ser-50 the chain carries Phosphoserine. Residue His-59 coordinates O2. Residue His-88 coordinates heme b. Phosphoserine is present on Ser-103. Residue Thr-109 is modified to Phosphothreonine. A Phosphoserine modification is found at Ser-125. Residues Thr-135 and Thr-138 each carry the phosphothreonine modification. Ser-139 bears the Phosphoserine mark.

It belongs to the globin family. Heterotetramer of two alpha chains and two beta chains. Red blood cells.

Functionally, involved in oxygen transport from the lung to the various peripheral tissues. Its function is as follows. Hemopressin acts as an antagonist peptide of the cannabinoid receptor CNR1. Hemopressin-binding efficiently blocks cannabinoid receptor CNR1 and subsequent signaling. This is Hemoglobin subunit alpha (HBA) from Ailuropoda melanoleuca (Giant panda).